Here is a 345-residue protein sequence, read N- to C-terminus: BAG family molecular chaperone regulator 1 (345 aa).

Residues Met1–Glu137 form a disordered region. Basic residues predominate over residues Arg68–Ser80. The segment covering Thr81–Glu91 has biased composition (basic and acidic residues). Residues Ser95 to Glu114 are compositionally biased toward low complexity. Tandem repeats lie at residues Glu96–Ser101, Glu102–Ser107, Glu108–Gly113, Glu114–Ser119, Gln120–Asp125, Glu126–Ser131, and Glu132–Glu137. Residues Glu96 to Glu137 are 7 X 6 AA tandem repeat of E-E-X(4). Over residues Glu115 to Glu137 the composition is skewed to basic and acidic residues. The Ubiquitin-like domain occupies Leu144–Pro224. The interval Asp172 to Gly219 is interaction with HSPA8. The tract at residues Met216–Glu345 is interaction with PPP1R15A. Phosphoserine is present on Ser223. Residues Gln246–Glu326 enclose the BAG domain.

As to quaternary structure, homodimer. Forms a heteromeric complex with HSP70/HSC70. Binds to the ATPase domain of HSP/HSC70 chaperones. Isoform 1, isoform 3 and isoform 4 but not isoform 2 interact with HSPA8/HSC70. Interacts with NR3C1. Interacts with the N-terminal region of MAPRE2. Interacts with PPP1R15A. Interacts with BCL2 in an ATP-dependent manner. Isoform 2 does not interact with BCL2. Interacts with SIAH1. Interacts with HSPA8 (via NBD). Interacts with HSPA1A (via NBD) and HSPA1B (via NBD). Interacts with SIAH2. Interacts with ESR1; the interaction is promoted in the absence of estradiol (17-beta-estradiol/E2). Ubiquitinated; mediated by SIAH1 or SIAH2 and leading to its subsequent proteasomal degradation. As to expression, isoform 4 is the most abundantly expressed isoform. It is ubiquitously expressed throughout most tissues, except the liver, colon, breast and uterine myometrium. Isoform 1 is expressed in the ovary and testis. Isoform 4 is expressed in several types of tumor cell lines, and at consistently high levels in leukemia and lymphoma cell lines. Isoform 1 is expressed in the prostate, breast and leukemia cell lines. Isoform 3 is the least abundant isoform in tumor cell lines (at protein level).

It is found in the nucleus. It localises to the cytoplasm. Its function is as follows. Co-chaperone for HSP70 and HSC70 chaperone proteins. Acts as a nucleotide-exchange factor (NEF) promoting the release of ADP from the HSP70 and HSC70 proteins thereby triggering client/substrate protein release. Nucleotide release is mediated via its binding to the nucleotide-binding domain (NBD) of HSPA8/HSC70 where as the substrate release is mediated via its binding to the substrate-binding domain (SBD) of HSPA8/HSC70. Inhibits the pro-apoptotic function of PPP1R15A, and has anti-apoptotic activity. Markedly increases the anti-cell death function of BCL2 induced by various stimuli. Involved in the STUB1-mediated proteasomal degradation of ESR1 in response to age-related circulating estradiol (17-beta-estradiol/E2) decline, thereby promotes neuronal apoptosis in response to ischemic reperfusion injury. This chain is BAG family molecular chaperone regulator 1 (BAG1), found in Homo sapiens (Human).